We begin with the raw amino-acid sequence, 352 residues long: Putative squamosa promoter-binding-like protein 19 (352 aa).

The interval 68–88 is disordered; it reads AAAPATRRARGGSGGGGGGGG. Gly residues predominate over residues 78–88; sequence GGSGGGGGGGG. The segment at 90 to 167 adopts an SBP-type zinc-finger fold; that stretch reads AEACSVDGCR…DGHNRRRRKP (78 aa). Zn(2+) contacts are provided by cysteine 93, cysteine 98, cysteine 115, histidine 118, cysteine 134, cysteine 137, histidine 141, and cysteine 153. The Bipartite nuclear localization signal motif lies at 150–166; the sequence is KKSCRKRLDGHNRRRRK. The disordered stretch occupies residues 152-174; the sequence is SCRKRLDGHNRRRRKPQHDALNP.

It localises to the nucleus. Functionally, trans-acting factor that binds specifically to the consensus nucleotide sequence 5'-TNCGTACAA-3'. The chain is Putative squamosa promoter-binding-like protein 19 (SPL19) from Oryza sativa subsp. japonica (Rice).